Reading from the N-terminus, the 68-residue chain is Phylloseptin-SP1 (68 aa).

An N-terminal signal peptide occupies residues Met-1 to Cys-22. A propeptide spanning residues Glu-23–Arg-45 is cleaved from the precursor. Leu-67 carries the leucine amide modification.

In terms of tissue distribution, expressed by the skin glands.

The protein localises to the secreted. Weak cationic amphipathic alpha-helical antimicrobial peptide with weak activity against Gram-positive and Gram-negative bacteria and fungi. Has been tested against E.coli (MIC&gt;217.69 uM), S.aureus (MIC&gt;217.69 uM), K.pneumoniae (MIC&gt;189.00 uM) and C.albicans (MIC&gt;217.69 uM). Shows a moderate hemolytic activity. The sequence is that of Phylloseptin-SP1 from Agalychnis spurrelli (Gliding leaf frog).